The primary structure comprises 499 residues: Glycerol kinase (499 aa).

ADP is bound at residue Thr13. Residues Thr13, Thr14, and Ser15 each coordinate ATP. Sn-glycerol 3-phosphate is bound at residue Thr13. Arg17 contributes to the ADP binding site. Sn-glycerol 3-phosphate contacts are provided by Arg83, Glu84, Tyr136, and Asp246. Glycerol contacts are provided by Arg83, Glu84, Tyr136, Asp246, and Gln247. Residues Thr268 and Gly311 each coordinate ADP. The ATP site is built by Thr268, Gly311, Gln315, and Gly412. Gly412 and Asn416 together coordinate ADP.

The protein belongs to the FGGY kinase family.

The enzyme catalyses glycerol + ATP = sn-glycerol 3-phosphate + ADP + H(+). It participates in polyol metabolism; glycerol degradation via glycerol kinase pathway; sn-glycerol 3-phosphate from glycerol: step 1/1. With respect to regulation, inhibited by fructose 1,6-bisphosphate (FBP). In terms of biological role, key enzyme in the regulation of glycerol uptake and metabolism. Catalyzes the phosphorylation of glycerol to yield sn-glycerol 3-phosphate. In Francisella philomiragia subsp. philomiragia (strain ATCC 25017 / CCUG 19701 / FSC 153 / O#319-036), this protein is Glycerol kinase.